The primary structure comprises 431 residues: V-type ATP synthase beta chain (431 aa).

The protein belongs to the ATPase alpha/beta chains family.

Functionally, produces ATP from ADP in the presence of a proton gradient across the membrane. The V-type beta chain is a regulatory subunit. The chain is V-type ATP synthase beta chain from Treponema denticola (strain ATCC 35405 / DSM 14222 / CIP 103919 / JCM 8153 / KCTC 15104).